Consider the following 329-residue polypeptide: Deoxynucleotidyltransferase terminal-interacting protein 1 (329 aa).

2 disordered regions span residues 1–22 (MGATGDAEQPRGPSGAERGGLE) and 147–178 (KRGRQAEEECAHRGSPLPKKRKGRPPGHILSS). Positions 56 to 147 (MTTSFTDPAI…RLTHELPGIK (92 aa)) are important for dimerization. Basic and acidic residues predominate over residues 147 to 158 (KRGRQAEEECAH). A DNA-binding region (a.T hook) is located at residues 159–173 (RGSPLPKKRKGRPPG). A Phosphoserine modification is found at serine 161. The Nuclear localization signal signature appears at 164-170 (PKKRKGR). Residues 197 to 316 (REGPKWDPAR…MRKYMETLRT (120 aa)) are important for DNA and nucleosome binding. Residues 216-237 (GSRANKALGMGGTRGRIYIKHP) constitute a DNA-binding region (H-T-H motif).

As to quaternary structure, monomer and homodimer. A minor proportion may form homotrimers. Interacts with ZNF541. Interacts with the terminal deoxynucleotidyltransferase DNTT. Interacts with TRERF1. Identified in a histone deacetylase complex that contains DNTTIP1, HDAC1 and MIDEAS; this complex assembles into a tetramer that contains four copies of each protein chain. Component of a histone deacetylase complex containing DNTTIP1, ZNF541, HDAC1 and HDAC2. Identified in a complex with KCTD19, HDAC1, HDAC2 and ZNF541.

Its subcellular location is the nucleus. In terms of biological role, increases DNTT terminal deoxynucleotidyltransferase activity (in vitro). Also acts as a transcriptional regulator, binding to the consensus sequence 5'-GNTGCATG-3' following an AT-tract. Associates with RAB20 promoter and positively regulates its transcription. Binds DNA and nucleosomes; may recruit HDAC1 complexes to nucleosomes or naked DNA. In Pongo abelii (Sumatran orangutan), this protein is Deoxynucleotidyltransferase terminal-interacting protein 1 (DNTTIP1).